The following is a 436-amino-acid chain: Probable sodium/metabolite cotransporter BASS4, chloroplastic (436 aa).

Residues 1 to 47 constitute a chloroplast transit peptide; it reads MAIASTLASTQNPFLCLRQPPSPGNRSVVFRRCQDPCGRRWISRSIR. The next 9 membrane-spanning stretches (helical) occupy residues 109–129, 131–151, 157–177, 195–215, 225–245, 257–277, 297–314, 328–348, and 403–423; these read FLPLALVSGVGLGFANPTLGC, ADKYSFTKISTCGIFIISGLT, IGAAVKGWPLGLFGLISILLL, LVTGLGIFCCMPTTLSSGVAL, LALAVTVASNLLGILTIPFWV, FPTDQLFRSLIVTLLIPLIIG, LFSKINAICLSLVPWIQV, VFLAAVGIGILLHLSLLAFNA, and PCVAAHLNQIMIDSVLVNLWL.

This sequence belongs to the bile acid:sodium symporter (BASS) (TC 2.A.28) family.

It is found in the membrane. The protein resides in the plastid. It localises to the chloroplast envelope. May function as sodium-coupled metabolite transporter across the chloroplast envelope. The chain is Probable sodium/metabolite cotransporter BASS4, chloroplastic (BASS4) from Arabidopsis thaliana (Mouse-ear cress).